The sequence spans 381 residues: Chaperone protein DnaJ (381 aa).

Residues 5-70 (DYYEVLGCDR…QKRGAYDRYG (66 aa)) enclose the J domain. The CR-type zinc finger occupies 136-214 (GKTAQISIPT…CGGAGRVTRE (79 aa)). Zn(2+)-binding residues include Cys149, Cys152, Cys166, Cys169, Cys188, Cys191, Cys202, and Cys205. 4 CXXCXGXG motif repeats span residues 149-156 (CEVCSGSG), 166-173 (CRTCNGAG), 188-195 (CPSCQGRG), and 202-209 (CPNCGGAG).

It belongs to the DnaJ family. Homodimer. Zn(2+) is required as a cofactor.

The protein localises to the cytoplasm. In terms of biological role, participates actively in the response to hyperosmotic and heat shock by preventing the aggregation of stress-denatured proteins and by disaggregating proteins, also in an autonomous, DnaK-independent fashion. Unfolded proteins bind initially to DnaJ; upon interaction with the DnaJ-bound protein, DnaK hydrolyzes its bound ATP, resulting in the formation of a stable complex. GrpE releases ADP from DnaK; ATP binding to DnaK triggers the release of the substrate protein, thus completing the reaction cycle. Several rounds of ATP-dependent interactions between DnaJ, DnaK and GrpE are required for fully efficient folding. Also involved, together with DnaK and GrpE, in the DNA replication of plasmids through activation of initiation proteins. This Azorhizobium caulinodans (strain ATCC 43989 / DSM 5975 / JCM 20966 / LMG 6465 / NBRC 14845 / NCIMB 13405 / ORS 571) protein is Chaperone protein DnaJ.